We begin with the raw amino-acid sequence, 392 residues long: Putative 8-amino-7-oxononanoate synthase (392 aa).

Arginine 22 contributes to the substrate binding site. Position 109–110 (109–110 (GW)) interacts with pyridoxal 5'-phosphate. Histidine 139 is a substrate binding site. Residues serine 187, 212 to 215 (DEAH), and 239 to 242 (TFSK) contribute to the pyridoxal 5'-phosphate site. The residue at position 242 (lysine 242) is an N6-(pyridoxal phosphate)lysine. Threonine 356 lines the substrate pocket.

This sequence belongs to the class-II pyridoxal-phosphate-dependent aminotransferase family. BioF subfamily. In terms of assembly, homodimer. It depends on pyridoxal 5'-phosphate as a cofactor.

The catalysed reaction is 6-carboxyhexanoyl-[ACP] + L-alanine + H(+) = (8S)-8-amino-7-oxononanoate + holo-[ACP] + CO2. It participates in cofactor biosynthesis; biotin biosynthesis. In terms of biological role, catalyzes the decarboxylative condensation of pimeloyl-[acyl-carrier protein] and L-alanine to produce 8-amino-7-oxononanoate (AON), [acyl-carrier protein], and carbon dioxide. This Paramagnetospirillum magneticum (strain ATCC 700264 / AMB-1) (Magnetospirillum magneticum) protein is Putative 8-amino-7-oxononanoate synthase (bioF).